The chain runs to 246 residues: UPF0309 protein ABC0887 (246 aa).

Residues 33–212 enclose the SIS domain; sequence MVHAIKEGKS…VLKMIEQLEE (180 aa).

The protein belongs to the UPF0309 family.

This Shouchella clausii (strain KSM-K16) (Alkalihalobacillus clausii) protein is UPF0309 protein ABC0887.